The following is a 481-amino-acid chain: Cysteine--tRNA ligase (481 aa).

C29 is a binding site for Zn(2+). The 'HIGH' region signature appears at 31–41 (PTTYDYIHLGN). Zn(2+)-binding residues include C209, H234, and E238. Residues 267–271 (KMSKS) carry the 'KMSKS' region motif. Position 270 (K270) interacts with ATP.

This sequence belongs to the class-I aminoacyl-tRNA synthetase family. Monomer. The cofactor is Zn(2+).

The protein localises to the cytoplasm. It catalyses the reaction tRNA(Cys) + L-cysteine + ATP = L-cysteinyl-tRNA(Cys) + AMP + diphosphate. This Heliobacterium modesticaldum (strain ATCC 51547 / Ice1) protein is Cysteine--tRNA ligase.